The following is a 64-amino-acid chain: Large ribosomal subunit protein bL35 (64 aa).

The protein belongs to the bacterial ribosomal protein bL35 family.

The chain is Large ribosomal subunit protein bL35 from Shewanella baltica (strain OS223).